Reading from the N-terminus, the 364-residue chain is DNA replication and repair protein RecF (364 aa).

Residue 30-37 participates in ATP binding; it reads GDNGAGKT.

The protein belongs to the RecF family.

The protein resides in the cytoplasm. The RecF protein is involved in DNA metabolism; it is required for DNA replication and normal SOS inducibility. RecF binds preferentially to single-stranded, linear DNA. It also seems to bind ATP. This is DNA replication and repair protein RecF from Stenotrophomonas maltophilia (strain K279a).